The chain runs to 330 residues: Phenylalanine--tRNA ligase alpha subunit (330 aa).

Residue Glu-255 coordinates Mg(2+).

It belongs to the class-II aminoacyl-tRNA synthetase family. Phe-tRNA synthetase alpha subunit type 1 subfamily. Tetramer of two alpha and two beta subunits. Requires Mg(2+) as cofactor.

The protein localises to the cytoplasm. The catalysed reaction is tRNA(Phe) + L-phenylalanine + ATP = L-phenylalanyl-tRNA(Phe) + AMP + diphosphate + H(+). This is Phenylalanine--tRNA ligase alpha subunit from Acinetobacter baylyi (strain ATCC 33305 / BD413 / ADP1).